We begin with the raw amino-acid sequence, 655 residues long: Ribonuclease 3 (655 aa).

Disordered regions lie at residues 1 to 148 and 171 to 376; these read MENL…NSEK and LIAP…NIPL. Residues 1–400 are unknown; it reads MENLEKNTKK…NYIKDNYPVI (400 aa). The segment covering 8-20 has biased composition (basic residues); that stretch reads TKKKIKKPNNFKK. Composition is skewed to basic and acidic residues over residues 21–34 and 69–89; these read NNKDKTEELKDKPT and DYEKKIREIQAKEAKKIRSDE. Residues 92–102 show a composition bias toward low complexity; it reads NNNSKKQNNNK. A compositionally biased stretch (basic residues) spans 103–115; the sequence is QAKKKANKNKKQK. A compositionally biased stretch (polar residues) spans 135-148; sequence AANNQVKAIPNSEK. Low complexity predominate over residues 206–223; that stretch reads NNFVNNQKNHNKNNAGNK. Polar residues-rich tracts occupy residues 229–242 and 250–259; these read PTKPLNQSKLSKST and PNFTSNQPKP. Composition is skewed to basic and acidic residues over residues 260-274 and 298-309; these read TQKEDSKKVKAKKAE and DQTKKKQPKENK. Over residues 310-332 the composition is skewed to low complexity; that stretch reads NQQIKAVNLNNNQQKTNNNNQKN. Residues 333-350 show a composition bias toward basic and acidic residues; that stretch reads SVDKSENDNNKKKSEANQ. The segment covering 351–360 has biased composition (low complexity); sequence KQENLNPNNN. Residues 401–655 form an RNase 3 region; the sequence is YADLKEKNRL…KFRGLLKLEK (255 aa). Positions 432 to 556 constitute an RNase III domain; that stretch reads LELLLKKFKV…FIGAMYLDQG (125 aa). Position 472 (Glu-472) interacts with Mg(2+). Asp-476 is an active-site residue. Mg(2+)-binding residues include Asp-542 and Glu-545. Glu-545 is a catalytic residue. Residues 582-649 enclose the DRBM domain; it reads DYKSIFQEII…AKEAISKFRG (68 aa).

Belongs to the ribonuclease III family. Homodimer. Requires Mg(2+) as cofactor.

It is found in the cytoplasm. The enzyme catalyses Endonucleolytic cleavage to 5'-phosphomonoester.. In terms of biological role, digests double-stranded RNA. Involved in the processing of primary rRNA transcript to yield the immediate precursors to the large and small rRNAs (23S and 16S). Processes some mRNAs, and tRNAs when they are encoded in the rRNA operon. Processes pre-crRNA and tracrRNA of type II CRISPR loci if present in the organism. This is Ribonuclease 3 (rnc) from Mycoplasmoides gallisepticum (strain R(low / passage 15 / clone 2)) (Mycoplasma gallisepticum).